Here is a 200-residue protein sequence, read N- to C-terminus: NAD(P)H dehydrogenase (quinone) (200 aa).

A Flavodoxin-like domain is found at 7–199; the sequence is LAIVFYSSTG…RQVELTAKLL (193 aa). Residues 13–18, 86–88, 121–127, and His142 contribute to the FMN site; these read SSTGTG, TRF, and SAQNVNG.

It belongs to the WrbA family. As to quaternary structure, homotetramer. The cofactor is FMN.

The enzyme catalyses a quinone + NADH + H(+) = a quinol + NAD(+). It catalyses the reaction a quinone + NADPH + H(+) = a quinol + NADP(+). The protein is NAD(P)H dehydrogenase (quinone) of Deinococcus radiodurans (strain ATCC 13939 / DSM 20539 / JCM 16871 / CCUG 27074 / LMG 4051 / NBRC 15346 / NCIMB 9279 / VKM B-1422 / R1).